The chain runs to 363 residues: MNILQEPIDFLKKDELKNIDLSQMDKKERYKIWKRIPKCELHCHLDLCFSADFFLSCVRKYNLQPNLSDEEVLDYYLFAKGGKSLGEFVEKAIRVADIFQDYEMIEDLAKHAVFNKYKEGVVLMEFRYSPTFVAFKHNLDIELIHQAIVKGIKEVVELLDHKIDVTLLCIGDTGHRAADIKASADFCLKHKADFVGFDHGGHEVDLKPYKEIFDYVKEGGMHLTVHAGEDVTLPNLNTLYSAIQVLKVERIGHGIRVSESQELIDMVKENNILLEVCPISNVLLKNAKSFDTHPIRKLYDAGVKVSVSSDDPGMFLTNINDDYEKLYTHLHFTLEDFMKMNEWALEKSFIGCDIKEKIKKLYF.

Zn(2+) is bound by residues His42 and His44. A purine D-ribonucleoside is bound by residues 44–46, Asp172, and Gly201; that span reads HLD. The tract at residues 170 to 184 is gating helix loop; regulates binding affinity for substrates and thus substrate selectivity; that stretch reads IGDTGHRAADIKASA. Residue His226 participates in Zn(2+) binding. 3 residues coordinate a purine D-ribonucleoside: Glu229, His253, and Asp310. Asp310 is a binding site for Zn(2+).

It belongs to the metallo-dependent hydrolases superfamily. Adenosine and AMP deaminases family. It depends on Zn(2+) as a cofactor.

The catalysed reaction is adenosine + H2O + H(+) = inosine + NH4(+). The enzyme catalyses S-methyl-5'-thioadenosine + H2O + H(+) = S-methyl-5'-thioinosine + NH4(+). It functions in the pathway purine metabolism; purine nucleoside salvage. Inhibited by coformycin and methylthiocoformycin (MT-coformycin). Its function is as follows. Catalyzes the hydrolytic deamination of adenosine to produce inosine. Unlike mammalian adenosine deaminases, also catalyzes the deamination of 5'-methylthioadenosine (MTA), a by-product of polyamine biosynthesis, to produce 5'-methylthioinosine (MTI). Plays an essential role in the purine salvage pathway which allows the parasite to use host cell purines for the synthesis of nucleic acids. The chain is Adenosine deaminase from Plasmodium knowlesi.